The primary structure comprises 547 residues: Chaperonin GroEL (547 aa).

Residues 30–33 (TLGP), lysine 51, 87–91 (DGTTT), glycine 415, and aspartate 496 contribute to the ATP site. Residues 528–547 (KEGAGAGGGMPDMGGMGGMM) form a disordered region. Over residues 531–547 (AGAGGGMPDMGGMGGMM) the composition is skewed to gly residues.

It belongs to the chaperonin (HSP60) family. In terms of assembly, forms a cylinder of 14 subunits composed of two heptameric rings stacked back-to-back. Interacts with the co-chaperonin GroES.

It localises to the cytoplasm. It catalyses the reaction ATP + H2O + a folded polypeptide = ADP + phosphate + an unfolded polypeptide.. In terms of biological role, together with its co-chaperonin GroES, plays an essential role in assisting protein folding. The GroEL-GroES system forms a nano-cage that allows encapsulation of the non-native substrate proteins and provides a physical environment optimized to promote and accelerate protein folding. The protein is Chaperonin GroEL of Dinoroseobacter shibae (strain DSM 16493 / NCIMB 14021 / DFL 12).